A 114-amino-acid polypeptide reads, in one-letter code: UPF0342 protein LSEI_1724 (114 aa).

The protein belongs to the UPF0342 family.

This Lacticaseibacillus paracasei (strain ATCC 334 / BCRC 17002 / CCUG 31169 / CIP 107868 / KCTC 3260 / NRRL B-441) (Lactobacillus paracasei) protein is UPF0342 protein LSEI_1724.